Consider the following 469-residue polypeptide: Adenosylhomocysteinase (469 aa).

The substrate site is built by Thr-63, Asp-139, and Glu-164. Residue 165–167 (TTT) coordinates NAD(+). Positions 194 and 198 each coordinate substrate. NAD(+) is bound by residues Asn-199, 228–233 (GYGDVG), Glu-251, Asn-300, 321–323 (IGH), and Asn-375.

The protein belongs to the adenosylhomocysteinase family. It depends on NAD(+) as a cofactor.

It localises to the cytoplasm. The catalysed reaction is S-adenosyl-L-homocysteine + H2O = L-homocysteine + adenosine. It functions in the pathway amino-acid biosynthesis; L-homocysteine biosynthesis; L-homocysteine from S-adenosyl-L-homocysteine: step 1/1. May play a key role in the regulation of the intracellular concentration of adenosylhomocysteine. This Pseudomonas fluorescens (strain SBW25) protein is Adenosylhomocysteinase.